Reading from the N-terminus, the 129-residue chain is Large-conductance mechanosensitive channel (129 aa).

2 consecutive transmembrane segments (helical) span residues 10-30 (FAVKGNVVDMAVGVIIGGAFG) and 76-96 (GAFIQNVFDFLIIAIAVFGMV).

This sequence belongs to the MscL family. In terms of assembly, homopentamer.

It is found in the cell inner membrane. Functionally, channel that opens in response to stretch forces in the membrane lipid bilayer. May participate in the regulation of osmotic pressure changes within the cell. This Actinobacillus pleuropneumoniae serotype 5b (strain L20) protein is Large-conductance mechanosensitive channel.